The primary structure comprises 1524 residues: DNA polymerase alpha catalytic subunit (1524 aa).

Disordered stretches follow at residues 1–53 (MSGD…QKPI) and 68–139 (RRRE…KVNP). The span at 20–30 (SSRKDTLERLK) shows a compositional bias: basic and acidic residues. The span at 79 to 96 (EDGEGGDLGYLDEGEEED) shows a compositional bias: acidic residues. Residues C1333, C1336, C1375, C1378, C1414, C1419, C1440, and C1446 each coordinate Zn(2+). The CysA-type zinc-finger motif lies at 1333–1378 (CPSCSTAFNCPSIISSVCASISKKPATPETEESDSTFWLKLHCPKC). Positions 1414-1446 (CEDESCKHTTRSPNFRLLGERERGTVCPNYPNC) match the CysB motif motif.

It belongs to the DNA polymerase type-B family.

It localises to the nucleus. It catalyses the reaction DNA(n) + a 2'-deoxyribonucleoside 5'-triphosphate = DNA(n+1) + diphosphate. In terms of biological role, polymerase alpha in a complex with DNA primase is a replicative polymerase. The sequence is that of DNA polymerase alpha catalytic subunit (POLA) from Arabidopsis thaliana (Mouse-ear cress).